Reading from the N-terminus, the 198-residue chain is MAEVRARVDFKVGAKSNIDAEILSFRGLKTDKEHVAVIFKSADVTQEVPLVRMHSECLTGDVFHSSRCDCGEQLEETINRMGESGGIILYLRQEGRGIGLYNKIDAYRLQSEGMNTYEANNHLGFDDDLRDFTEAAQMLEALGIKQIRLVTNNPKKIRELSEYGIEIVEVVNTSAHIKEGNESYLKAKVSHGKHHLKV.

52 to 56 (RMHSE) is a binding site for GTP. Zn(2+) contacts are provided by Cys57, Cys68, and Cys70. GTP-binding positions include Gln73, 94 to 96 (EGR), and Thr116. Residue Asp128 is the Proton acceptor of the active site. Arg130 (nucleophile) is an active-site residue. GTP is bound by residues Thr151 and Lys156.

The protein belongs to the GTP cyclohydrolase II family. Requires Zn(2+) as cofactor.

It catalyses the reaction GTP + 4 H2O = 2,5-diamino-6-hydroxy-4-(5-phosphoribosylamino)-pyrimidine + formate + 2 phosphate + 3 H(+). It functions in the pathway cofactor biosynthesis; riboflavin biosynthesis; 5-amino-6-(D-ribitylamino)uracil from GTP: step 1/4. Catalyzes the conversion of GTP to 2,5-diamino-6-ribosylamino-4(3H)-pyrimidinone 5'-phosphate (DARP), formate and pyrophosphate. The protein is GTP cyclohydrolase-2 of Vibrio vulnificus (strain CMCP6).